The chain runs to 150 residues: Large ribosomal subunit protein eL19 (150 aa).

The interval 59 to 89 is disordered; sequence SRYRARIRHEQKKKGRHRGPGSRKGKKTARM. The span at 61 to 89 shows a compositional bias: basic residues; the sequence is YRARIRHEQKKKGRHRGPGSRKGKKTARM.

This sequence belongs to the eukaryotic ribosomal protein eL19 family. In terms of assembly, part of the 50S ribosomal subunit.

In terms of biological role, binds to the 23S rRNA. This Pyrococcus horikoshii (strain ATCC 700860 / DSM 12428 / JCM 9974 / NBRC 100139 / OT-3) protein is Large ribosomal subunit protein eL19.